Consider the following 557-residue polypeptide: Formate--tetrahydrofolate ligase (557 aa).

Position 65–72 (65–72 (TPAGEGKT)) interacts with ATP.

It belongs to the formate--tetrahydrofolate ligase family.

It catalyses the reaction (6S)-5,6,7,8-tetrahydrofolate + formate + ATP = (6R)-10-formyltetrahydrofolate + ADP + phosphate. The protein operates within one-carbon metabolism; tetrahydrofolate interconversion. The sequence is that of Formate--tetrahydrofolate ligase from Methylococcus capsulatus (strain ATCC 33009 / NCIMB 11132 / Bath).